Reading from the N-terminus, the 290-residue chain is Ribosomal RNA small subunit methyltransferase A (290 aa).

Positions 27, 29, 54, 75, 100, and 125 each coordinate S-adenosyl-L-methionine.

This sequence belongs to the class I-like SAM-binding methyltransferase superfamily. rRNA adenine N(6)-methyltransferase family. RsmA subfamily.

Its subcellular location is the cytoplasm. The catalysed reaction is adenosine(1518)/adenosine(1519) in 16S rRNA + 4 S-adenosyl-L-methionine = N(6)-dimethyladenosine(1518)/N(6)-dimethyladenosine(1519) in 16S rRNA + 4 S-adenosyl-L-homocysteine + 4 H(+). Its function is as follows. Specifically dimethylates two adjacent adenosines (A1518 and A1519) in the loop of a conserved hairpin near the 3'-end of 16S rRNA in the 30S particle. May play a critical role in biogenesis of 30S subunits. This chain is Ribosomal RNA small subunit methyltransferase A, found in Streptococcus pneumoniae (strain ATCC 700669 / Spain 23F-1).